Consider the following 352-residue polypeptide: Peptide chain release factor 1 (352 aa).

Glutamine 233 is modified (N5-methylglutamine). A disordered region spans residues 288–309 (NAKDRKEQVGSGDRSERIRTYN). A compositionally biased stretch (basic and acidic residues) spans 289–306 (AKDRKEQVGSGDRSERIR).

It belongs to the prokaryotic/mitochondrial release factor family. Methylated by PrmC. Methylation increases the termination efficiency of RF1.

The protein localises to the cytoplasm. In terms of biological role, peptide chain release factor 1 directs the termination of translation in response to the peptide chain termination codons UAG and UAA. In Helicobacter pylori (strain ATCC 700392 / 26695) (Campylobacter pylori), this protein is Peptide chain release factor 1 (prfA).